A 431-amino-acid polypeptide reads, in one-letter code: Trigger factor (431 aa).

The region spanning 158–243 (GDLVAVETWS…VAEVSEPVVP (86 aa)) is the PPIase FKBP-type domain.

Belongs to the FKBP-type PPIase family. Tig subfamily.

Its subcellular location is the cytoplasm. The catalysed reaction is [protein]-peptidylproline (omega=180) = [protein]-peptidylproline (omega=0). Involved in protein export. Acts as a chaperone by maintaining the newly synthesized protein in an open conformation. Functions as a peptidyl-prolyl cis-trans isomerase. The sequence is that of Trigger factor from Stenotrophomonas maltophilia (strain K279a).